The sequence spans 321 residues: Malate dehydrogenase (321 aa).

NAD(+)-binding positions include 13–18 (GAGNIG) and aspartate 38. The substrate site is built by arginine 87 and arginine 93. Residues asparagine 100 and 123-125 (VTN) each bind NAD(+). 2 residues coordinate substrate: asparagine 125 and arginine 156. Catalysis depends on histidine 180, which acts as the Proton acceptor.

This sequence belongs to the LDH/MDH superfamily. MDH type 3 family.

It catalyses the reaction (S)-malate + NAD(+) = oxaloacetate + NADH + H(+). In terms of biological role, catalyzes the reversible oxidation of malate to oxaloacetate. The chain is Malate dehydrogenase from Anaplasma phagocytophilum (strain HZ).